The primary structure comprises 186 residues: ATP synthase subunit b (186 aa).

A helical membrane pass occupies residues 28–48 (IVWSIIPFAVILFVFAKVVLP).

It belongs to the ATPase B chain family. F-type ATPases have 2 components, F(1) - the catalytic core - and F(0) - the membrane proton channel. F(1) has five subunits: alpha(3), beta(3), gamma(1), delta(1), epsilon(1). F(0) has three main subunits: a(1), b(2) and c(10-14). The alpha and beta chains form an alternating ring which encloses part of the gamma chain. F(1) is attached to F(0) by a central stalk formed by the gamma and epsilon chains, while a peripheral stalk is formed by the delta and b chains.

Its subcellular location is the cell membrane. F(1)F(0) ATP synthase produces ATP from ADP in the presence of a proton or sodium gradient. F-type ATPases consist of two structural domains, F(1) containing the extramembraneous catalytic core and F(0) containing the membrane proton channel, linked together by a central stalk and a peripheral stalk. During catalysis, ATP synthesis in the catalytic domain of F(1) is coupled via a rotary mechanism of the central stalk subunits to proton translocation. Functionally, component of the F(0) channel, it forms part of the peripheral stalk, linking F(1) to F(0). This is ATP synthase subunit b from Corynebacterium urealyticum (strain ATCC 43042 / DSM 7109).